A 105-amino-acid chain; its full sequence is Endoribonuclease MazF1 (105 aa).

The protein belongs to the PemK/MazF family. In terms of assembly, forms a complex with cognate antitoxin MazE1.

Functionally, toxic component of a type II toxin-antitoxin (TA) system. Acts as an endoribonuclease on single-strand RNA, cleaving between the first and second bases in the sequence UCGCU. Neutralized by coexpression with cognate antitoxin MazE1. The protein is Endoribonuclease MazF1 (mazF1) of Mycobacterium bovis (strain ATCC BAA-935 / AF2122/97).